Consider the following 299-residue polypeptide: Virginiamycin B lyase (299 aa).

A substrate-binding site is contributed by His229. Glu269 lines the Mg(2+) pocket. His271 (proton acceptor) is an active-site residue. Glu286 provides a ligand contact to Mg(2+).

This sequence belongs to the Vgb family. As to quaternary structure, monomer. Mg(2+) serves as cofactor.

Its function is as follows. Inactivates the type B streptogramin antibiotics by linearizing the lactone ring at the ester linkage, generating a free phenylglycine carboxylate and converting the threonyl moiety into 2-amino-butenoic acid. In Bordetella bronchiseptica (strain ATCC BAA-588 / NCTC 13252 / RB50) (Alcaligenes bronchisepticus), this protein is Virginiamycin B lyase.